We begin with the raw amino-acid sequence, 66 residues long: Large ribosomal subunit protein bL35 (66 aa).

The protein belongs to the bacterial ribosomal protein bL35 family.

The chain is Large ribosomal subunit protein bL35 from Ruegeria sp. (strain TM1040) (Silicibacter sp.).